We begin with the raw amino-acid sequence, 377 residues long: Hydrogenase maturation factor HypD (377 aa).

Residues Cys-41, Cys-69, and Cys-72 each contribute to the Fe cation site.

The protein belongs to the HypD family. The cofactor is [4Fe-4S] cluster.

Its pathway is protein modification; [NiFe] hydrogenase maturation. In terms of biological role, involved in the maturation of [NiFe] hydrogenases. Involved in the biosynthesis of the Fe(CN)(2)CO cofactor. This is Hydrogenase maturation factor HypD from Rhodobacter capsulatus (Rhodopseudomonas capsulata).